The sequence spans 302 residues: Sulfate adenylyltransferase subunit 2 (302 aa).

Belongs to the PAPS reductase family. CysD subfamily. In terms of assembly, heterodimer composed of CysD, the smaller subunit, and CysN.

It carries out the reaction sulfate + ATP + H(+) = adenosine 5'-phosphosulfate + diphosphate. The protein operates within sulfur metabolism; hydrogen sulfide biosynthesis; sulfite from sulfate: step 1/3. With CysN forms the ATP sulfurylase (ATPS) that catalyzes the adenylation of sulfate producing adenosine 5'-phosphosulfate (APS) and diphosphate, the first enzymatic step in sulfur assimilation pathway. APS synthesis involves the formation of a high-energy phosphoric-sulfuric acid anhydride bond driven by GTP hydrolysis by CysN coupled to ATP hydrolysis by CysD. This Escherichia coli O1:K1 / APEC protein is Sulfate adenylyltransferase subunit 2.